Reading from the N-terminus, the 423-residue chain is Deferrochelatase (423 aa).

Residues 1–35 (MQYEDKNGVNEPSRRRLLKGIGALALAGSCPVAHA) constitute a signal peptide (tat-type signal). Residues 236-238 (GTA), His-329, 334-336 (NPR), and Arg-347 contribute to the heme b site.

It belongs to the DyP-type peroxidase family. EfeB subfamily. In terms of assembly, the heme-bound EfeB forms a homodimer whereas the apo-form mainly exists as a monomer. Part of a ferrous iron transporter composed of EfeU, EfeO and EfeB. Heme b serves as cofactor. Predicted to be exported by the Tat system. The position of the signal peptide cleavage has not been experimentally proven.

The protein resides in the periplasm. It catalyses the reaction heme b + 2 H(+) = protoporphyrin IX + Fe(2+). In terms of biological role, involved in the recovery of exogenous heme iron. Extracts iron from heme while preserving the protoporphyrin ring intact. Also displays peroxidase activity on guaiacol and catechol in vitro. The deferrochelatase activity appears to be closely related to the peroxidation activity, but the link is unclear. This is Deferrochelatase (efeB) from Escherichia coli O157:H7.